A 427-amino-acid chain; its full sequence is MDVLEVAARATGTGPVCDACLGRLVADRSFGLSNAERGSALRTSLALRDDEDYEPVETADCWVCEGRCTEFDEWAERAAEAVEDVEFATYNVGTRPPPLIEENEALLREEAGLDDDAGEPFKSEFNREVGKRFGRLTETEVSFDRPDVQFTIDLAEDEIDAKVNSTFVYGRYRKLERDIPQTEWPCRECKGSGRQGADPCDHCGGSGYLYDDSVEEYTAPVVEDVMDGTEATFHGAGREDVDALMLGTGRPFVIEVEEPRRRRVDTDRLQADINAFADGAVEVEGLRLATYDMVERVKEHDAAKRYRAEVAFDADVDADALAAAVEELEGTTVEQYTPNRVDHRRASITRERDVYEATAELDDARHAIVEIHGEGGLYIKELISGDEGRTEPSLAGLLGVGAEVTALDVVAVEGEDEPFEREEFFRE.

The active-site Nucleophile is the Asp240. Tyr306 and Tyr378 together coordinate substrate.

The protein belongs to the pseudouridine synthase Pus10 family.

It catalyses the reaction uridine(54) in tRNA = pseudouridine(54) in tRNA. The catalysed reaction is uridine(55) in tRNA = pseudouridine(55) in tRNA. Functionally, responsible for synthesis of pseudouridine from uracil-54 and uracil-55 in the psi GC loop of transfer RNAs. The polypeptide is tRNA pseudouridine synthase Pus10 (Halorubrum lacusprofundi (strain ATCC 49239 / DSM 5036 / JCM 8891 / ACAM 34)).